The sequence spans 214 residues: Thymidylate kinase (214 aa).

10-17 is a binding site for ATP; the sequence is GGEGVGKT.

This sequence belongs to the thymidylate kinase family.

It catalyses the reaction dTMP + ATP = dTDP + ADP. Functionally, phosphorylation of dTMP to form dTDP in both de novo and salvage pathways of dTTP synthesis. The polypeptide is Thymidylate kinase (Bartonella quintana (strain Toulouse) (Rochalimaea quintana)).